Reading from the N-terminus, the 492-residue chain is Catalase isozyme C (492 aa).

Heme is bound at residue arginine 62. Residue histidine 65 is part of the active site. Arginine 102 contributes to the heme binding site. Asparagine 138 is an active-site residue. Phenylalanine 151 contacts heme. The residue at position 210 (tyrosine 210) is a Phosphotyrosine; by STRK1. The 3-(S-cysteinyl)-tyrosine (Cys-Tyr) cross-link spans 325–348 (CPGIIVPGIYYSDDKLLQTRIFSY). Residues arginine 344, tyrosine 348, and arginine 355 each coordinate heme. Positions 484–492 (SRLSAKPSM) match the Peroxisome targeting signal motif.

The protein belongs to the catalase family. In terms of assembly, homotetramer. Interacts with GLO1 and GLO4; these interactions are disturbed by alpha-hydroxy-2-pyridinemethanesulfonic acid (HPMS) and salicylic acid (SA). Interacts with STRK1 at the plasma membrane. Requires heme as cofactor. Activated by STRK1-mediated phosphorylation at Tyr-210 upon salt and oxidative stress. Highly expressed in mature leaves. Mainly expressed in leaf blades, stems, panicles, leaf sheaths, and culms, but barely in roots.

It is found in the peroxisome. The protein resides in the glyoxysome. It localises to the cell membrane. The catalysed reaction is 2 H2O2 = O2 + 2 H2O. Strongly inhibited by beta-mercaptoethanol, sodium azide and potassium cyanide. Slightly repressed by 3-amino-1,2,4-triazole (3-AT). Activity is repressed proportionally to increased concentration of NaCl, KCl, LiCl and MgCl(2). Functionally, occurs in almost all aerobically respiring organisms and serves to protect cells from the toxic effects of hydrogen peroxide. Responsible for the redox homeostasis in leaves. Prevents nitric oxide (NO) accumulation and subsequent NO-mediated leaf cell death as well as the S-nitrosylation of specific proteins (e.g. glyceraldehyde 3-phosphate dehydrogenase and thioredoxin) by degrading H(2)O(2). Involved in photorespiration. Promotes drought stress tolerance and recovery. Involved in NO-mediated enhanced tolerance to zinc oxide nanoparticles (ZnO NPs)-induced phytotoxicity. Participates in melatonin-mediated detoxification. This Oryza sativa subsp. japonica (Rice) protein is Catalase isozyme C.